We begin with the raw amino-acid sequence, 748 residues long: Meprin A subunit alpha (748 aa).

Positions methionine 1–alanine 20 are cleaved as a signal peptide. A propeptide spanning residues valine 21 to arginine 66 is cleaved from the precursor. The region spanning asparagine 67 to threonine 261 is the Peptidase M12A domain. The Extracellular segment spans residues asparagine 67–serine 719. 3 disulfide bridges follow: cysteine 108-cysteine 260, cysteine 129-cysteine 148, and cysteine 270-cysteine 432. Asparagine 141 carries an N-linked (GlcNAc...) asparagine glycan. Histidine 156 is a Zn(2+) binding site. Glutamate 157 is a catalytic residue. 2 residues coordinate Zn(2+): histidine 160 and histidine 166. Residues asparagine 223, asparagine 259, asparagine 319, asparagine 441, and asparagine 542 are each glycosylated (N-linked (GlcNAc...) asparagine). Residues threonine 265–threonine 434 enclose the MAM domain. The MATH domain maps to glycine 435–phenylalanine 596. The disordered stretch occupies residues leucine 641–tryptophan 668. Positions phenylalanine 672–glutamine 712 constitute an EGF-like domain. Disulfide bonds link cysteine 676/cysteine 687, cysteine 681/cysteine 696, and cysteine 698/cysteine 711. Residues leucine 720–phenylalanine 739 traverse the membrane as a helical segment. Residues serine 740–glutamine 748 lie on the Cytoplasmic side of the membrane.

As to quaternary structure, homotetramer consisting of disulfide-linked alpha subunits, homooligomer consisting of disulfide-linked alpha subunit homodimers, or heterotetramer of two alpha and two beta subunits formed by non-covalent association of two disulfide-linked heterodimers. Interacts with MBL2 through its carbohydrate moiety. This interaction may inhibit its catalytic activity. Requires Zn(2+) as cofactor. In terms of processing, N-glycosylated; contains GlcNAc, galactose, mannose and a small amount of fucose. In terms of tissue distribution, colocalized with E-24.11 in proximal tubules of juxtamedullary nephrons.

It is found in the membrane. The catalysed reaction is Hydrolysis of protein and peptide substrates preferentially on carboxyl side of hydrophobic residues.. Its activity is regulated as follows. Inhibited by actinonin. The polypeptide is Meprin A subunit alpha (Mep1a) (Rattus norvegicus (Rat)).